The sequence spans 425 residues: DNA replication and repair protein RecF (425 aa).

30–37 (GPNGHGKT) is an ATP binding site.

This sequence belongs to the RecF family.

It is found in the cytoplasm. The RecF protein is involved in DNA metabolism; it is required for DNA replication and normal SOS inducibility. RecF binds preferentially to single-stranded, linear DNA. It also seems to bind ATP. The polypeptide is DNA replication and repair protein RecF (Corynebacterium jeikeium (strain K411)).